The following is a 418-amino-acid chain: Hydroxysteroid dehydrogenase-like protein 2 (418 aa).

NADP(+) contacts are provided by residues Gly17 to Gly23, Lys42, and Asp74. At Lys42 the chain carries N6-(2-hydroxyisobutyryl)lysine. Lys116 is subject to N6-acetyllysine. Tyr168 serves as the catalytic Proton acceptor. Position 172 (Lys172) interacts with NADP(+). Residues Ser287–Val310 are disordered. Residues Arg306–Asn415 enclose the SCP2 domain. Lys318 bears the N6-succinyllysine mark.

It belongs to the short-chain dehydrogenases/reductases (SDR) family.

It is found in the peroxisome. The protein localises to the mitochondrion. Has apparently no steroid dehydrogenase activity. Controls bile acid (BA) and lipid metabolism in response to nutritional cues. The polypeptide is Hydroxysteroid dehydrogenase-like protein 2 (HSDL2) (Pongo abelii (Sumatran orangutan)).